A 191-amino-acid chain; its full sequence is ATP synthase subunit b 1 (191 aa).

Residues 7–25 (RMRILCLCATTLLMAGSAL) traverse the membrane as a helical segment.

Belongs to the ATPase B chain family. As to quaternary structure, F-type ATPases have 2 components, F(1) - the catalytic core - and F(0) - the membrane proton channel. F(1) has five subunits: alpha(3), beta(3), gamma(1), delta(1), epsilon(1). F(0) has three main subunits: a(1), b(2) and c(10-14). The alpha and beta chains form an alternating ring which encloses part of the gamma chain. F(1) is attached to F(0) by a central stalk formed by the gamma and epsilon chains, while a peripheral stalk is formed by the delta and b chains.

The protein localises to the cell inner membrane. Functionally, f(1)F(0) ATP synthase produces ATP from ADP in the presence of a proton or sodium gradient. F-type ATPases consist of two structural domains, F(1) containing the extramembraneous catalytic core and F(0) containing the membrane proton channel, linked together by a central stalk and a peripheral stalk. During catalysis, ATP synthesis in the catalytic domain of F(1) is coupled via a rotary mechanism of the central stalk subunits to proton translocation. Its function is as follows. Component of the F(0) channel, it forms part of the peripheral stalk, linking F(1) to F(0). The protein is ATP synthase subunit b 1 of Syntrophotalea carbinolica (strain DSM 2380 / NBRC 103641 / GraBd1) (Pelobacter carbinolicus).